Consider the following 724-residue polypeptide: MELPNQHKQTAAEGFVSFLNWLCNPWRRQRTVNAAVAFQKDLLAIEDSEHLDDINECFEESAGAQSQRTKVVADGAYAPAKSNRTRRVRKQKKHKFVKYLVNEARAEFGLPKPTEANRLMVQHFLLRVCKDWGVVTAHVHGNVALALPLVFIPTEDDLLSRALMNTHATRAAVRGMDNVQGEGWWNNRLGIGGQVGLAFRSKXGCLERRPGFSTSVSRGEHPDLVVIPSGRPEKQRQLLRYSGIGGHLLIGIHNNSLSNLRRGLMERVFYVEGPNGLQDAPKPVKGAFRTLDKFRDLYTKNSWRHTPVTSEQFLMNYTGRKLTIYREAVDSLSHQPLSSRDAKLKTFVKAEKLNLSKKPDPAPRVIQPRSPRYNVCLGRYLRHYEHHAFKTIAKCFGEITVFKGFTLEQQGEIMRSKWNKYVNPVAVGLDASRFDQHVSVEALEYEHEFYLRDYPNDKQLKWLLKQQLCNVGTAFASDGIIKYKKKGCRMSGDMNTSLGNCILMCAMVYGLKEHLNINLSLANNGDDCVIVCEKADLKKLTSSIEPYFKQFGFKMEVEKPVDIFERIEFCQTQPVFDGSQYIMVRKPSVVTSKDVTSLIPCQTKAQYAEWLQAVGECGMSINGGIPVMQNFYQKLQTGIRRTKFTKTGEFQTNGLGYHSRYMHRVARVPSPETRLSFYLAFGITPDLQEALEIFYDTHKLELDDVIPTDTYQVSGEHLINGLPN.

Residues 424–540 enclose the RdRp catalytic domain; it reads PVAVGLDASR…VCEKADLKKL (117 aa).

It belongs to the tombusviridae RNA polymerase family.

It catalyses the reaction RNA(n) + a ribonucleoside 5'-triphosphate = RNA(n+1) + diphosphate. In terms of biological role, RNA-dependent RNA polymerase that plays an essential role in the virus replication. This Tobacco necrosis virus (strain A) (TNV-A) protein is RNA-directed RNA polymerase.